Here is a 350-residue protein sequence, read N- to C-terminus: uncharacterized protein (350 aa).

In terms of biological role, may play a role in septum formation. This is an uncharacterized protein from Mycobacterium tuberculosis (strain CDC 1551 / Oshkosh).